A 312-amino-acid polypeptide reads, in one-letter code: Eukaryotic translation initiation factor 2 subunit 2 (312 aa).

Disordered regions lie at residues A26–M104 and A125–W146. Position 44 is a phosphoserine (S44). Composition is skewed to acidic residues over residues A90–L102 and A125–N142. The residue at position 133 (S133) is a Phosphoserine. T145 is modified (phosphothreonine). The C4-type zinc-finger motif lies at C260–C284.

This sequence belongs to the eIF-2-beta/eIF-5 family. As to quaternary structure, eukaryotic translation initiation factor 2 eIF2 is a heterotrimeric complex composed of an alpha, a beta and a gamma subunit.

The protein resides in the cytoplasm. It is found in the cytosol. Its function is as follows. Component of the eIF2 complex that functions in the early steps of protein synthesis by forming a ternary complex with GTP and initiator tRNA. This complex binds to a 40S ribosomal subunit, followed by mRNA binding to form a 43S pre-initiation complex (43S PIC). Junction of the 60S ribosomal subunit to form the 80S initiation complex is preceded by hydrolysis of the GTP bound to eIF2 and release of an eIF2-GDP binary complex. In order for eIF2 to recycle and catalyze another round of initiation, the GDP bound to eIF2 must exchange with GTP by way of a reaction catalyzed by eIF2B. The sequence is that of Eukaryotic translation initiation factor 2 subunit 2 from Drosophila melanogaster (Fruit fly).